Consider the following 478-residue polypeptide: Abscisate beta-glucosyltransferase (478 aa).

Catalysis depends on His20, which acts as the Proton acceptor. His20 is a binding site for an anthocyanidin. Asp108 functions as the Charge relay in the catalytic mechanism. UDP-alpha-D-glucose-binding residues include Ala340, Gln342, His357, Trp360, Asn361, Ser362, and Glu365. Ala380 is an an anthocyanidin binding site. The UDP-alpha-D-glucose site is built by Glu381 and Gln382.

This sequence belongs to the UDP-glycosyltransferase family.

The catalysed reaction is 2-cis-(+)-abscisate + UDP-alpha-D-glucose = beta-D-glucopyranosyl cis-(+)-abscisate + UDP. Its function is as follows. Glucosyltransferase involved in the catabolism of abscisic acid (ABA). Adds a glucosyl group at the C-1 position of ABA; (S)-2-trans-abscisate is a better substrate than the natural (+)-S-abscisate or its enantiomer (-)-R-abscisate. No activity with (-)-phaseic acid (PA), methylated-ABA or with other hormones such as jasmonate, zeatin, auxin (IAA) or gibberellin A3 (GA3). This Phaseolus angularis (Azuki bean) protein is Abscisate beta-glucosyltransferase (AOG).